A 423-amino-acid chain; its full sequence is Histidine--tRNA ligase (423 aa).

This sequence belongs to the class-II aminoacyl-tRNA synthetase family. In terms of assembly, homodimer.

It is found in the cytoplasm. The enzyme catalyses tRNA(His) + L-histidine + ATP = L-histidyl-tRNA(His) + AMP + diphosphate + H(+). This chain is Histidine--tRNA ligase (hisS), found in Haemophilus influenzae (strain ATCC 51907 / DSM 11121 / KW20 / Rd).